Reading from the N-terminus, the 92-residue chain is Co-chaperonin GroES (92 aa).

Belongs to the GroES chaperonin family. Heptamer of 7 subunits arranged in a ring. Interacts with the chaperonin GroEL.

It localises to the cytoplasm. Its function is as follows. Together with the chaperonin GroEL, plays an essential role in assisting protein folding. The GroEL-GroES system forms a nano-cage that allows encapsulation of the non-native substrate proteins and provides a physical environment optimized to promote and accelerate protein folding. GroES binds to the apical surface of the GroEL ring, thereby capping the opening of the GroEL channel. The sequence is that of Co-chaperonin GroES from Methanosarcina barkeri (strain Fusaro / DSM 804).